A 106-amino-acid chain; its full sequence is MSKDNTINIEREKQLDTVKQKLAPPPMYKVLLNNDDYTPMDFVIEVLVRFFNLDSEKAHQIMLTVHYRGRAVCGVYTAEIAETKVMQVTQYAKKHQHPLMCTMEQV.

It belongs to the ClpS family. Binds to the N-terminal domain of the chaperone ClpA.

Functionally, involved in the modulation of the specificity of the ClpAP-mediated ATP-dependent protein degradation. In Pseudoalteromonas atlantica (strain T6c / ATCC BAA-1087), this protein is ATP-dependent Clp protease adapter protein ClpS.